A 193-amino-acid polypeptide reads, in one-letter code: p53 apoptosis effector related to PMP-22 (193 aa).

A run of 4 helical transmembrane segments spans residues 12–32, 81–101, 110–130, and 151–171; these read RWIL…ALAG, LFCG…ALCG, VIGG…VIYP, and WAYG…FFFC.

This sequence belongs to the TMEM47 family. Expressed in the stratified squamous skin epithelium of the skin and the tongue, but not in simple epithelia (at protein level). Expressed in the oral epithelium, tongue epithelium and skin (at protein level). More abundant in areas of lower flow stress in the inner curvature compared to the outer curvature regions of the aorta (at protein level). Expressed in luminal cells and myoepithelium cells of the mammary epithelium (at protein level). Expression increases during the early stages of pregnancy before decreasing before birth, expression continues to be weak during involution which mirrors decreased desmosome abundance and organization at these time points (at protein level). Expressed by epithelial cells at the mucosal surface in the proximal colon (at protein level). Expressed in apoptotic cells.

It is found in the cell junction. Its subcellular location is the desmosome. The protein localises to the cell membrane. The protein resides in the cytoplasm. Functionally, component of intercellular desmosome junctions. Plays a role in stratified epithelial integrity and cell-cell adhesion by promoting desmosome assembly. Thereby plays a role in barrier function of the skin against infection. Plays a role in mammary epithelial tissue homeostasis and remodeling during and after pregnancy, potentially via its involvement in desmosome cell-cell junctions. Required for tooth enamel development via facilitating desmosome-mediated ameloblast adhesion to the stratum intermedium during the transitional stage of amelogenesis. May also play a role in downstream transcriptional regulation of other genes involved in amelogenesis such as AMBN, ENAM, MMP20 and KLK4. Plays a role as an effector in the TP53-dependent apoptotic pathway. Positively regulates apoptosis in T-helper 17 (Th17) cell populations via caspase-dependent signaling. Promotes neutrophil transepithelial migration in response to chemoattractants such as hepoxilin A3 (HXA3), N-Formylmethionyl-leucyl-phenylalanine (fMLP) and CXCL8/IL-8. May act as a positive regulator of endothelial cell apoptosis in response to blood flow-derived shear stress. This chain is p53 apoptosis effector related to PMP-22, found in Mus musculus (Mouse).